Reading from the N-terminus, the 162-residue chain is Xanthine-guanine phosphoribosyltransferase (162 aa).

5-phospho-alpha-D-ribose 1-diphosphate-binding positions include 41–42 (RG) and 92–100 (DDLVDTGNT). Aspartate 93 is a Mg(2+) binding site. Positions 96 and 139 each coordinate guanine. Residues aspartate 96 and isoleucine 139 each contribute to the xanthine site. GMP contacts are provided by residues 96–100 (DTGNT) and 138–139 (WI).

It belongs to the purine/pyrimidine phosphoribosyltransferase family. XGPT subfamily. As to quaternary structure, homotetramer. It depends on Mg(2+) as a cofactor.

It localises to the cell inner membrane. The enzyme catalyses GMP + diphosphate = guanine + 5-phospho-alpha-D-ribose 1-diphosphate. It carries out the reaction XMP + diphosphate = xanthine + 5-phospho-alpha-D-ribose 1-diphosphate. The catalysed reaction is IMP + diphosphate = hypoxanthine + 5-phospho-alpha-D-ribose 1-diphosphate. It participates in purine metabolism; GMP biosynthesis via salvage pathway; GMP from guanine: step 1/1. It functions in the pathway purine metabolism; XMP biosynthesis via salvage pathway; XMP from xanthine: step 1/1. In terms of biological role, purine salvage pathway enzyme that catalyzes the transfer of the ribosyl-5-phosphate group from 5-phospho-alpha-D-ribose 1-diphosphate (PRPP) to the N9 position of the 6-oxopurines guanine and xanthine to form the corresponding ribonucleotides GMP (guanosine 5'-monophosphate) and XMP (xanthosine 5'-monophosphate), with the release of PPi. To a lesser extent, also acts on hypoxanthine. This is Xanthine-guanine phosphoribosyltransferase from Chromohalobacter salexigens (strain ATCC BAA-138 / DSM 3043 / CIP 106854 / NCIMB 13768 / 1H11).